The primary structure comprises 480 residues: Adenosylhomocysteinase (480 aa).

Residues T63, D142, and E203 each contribute to the substrate site. 204–206 (TTT) is a binding site for NAD(+). Residues K233 and D237 each coordinate substrate. NAD(+) contacts are provided by residues N238, 267–272 (GYGDVG), E290, N325, 346–348 (IGH), and N394.

It belongs to the adenosylhomocysteinase family. It depends on NAD(+) as a cofactor.

The protein localises to the cytoplasm. The catalysed reaction is S-adenosyl-L-homocysteine + H2O = L-homocysteine + adenosine. It functions in the pathway amino-acid biosynthesis; L-homocysteine biosynthesis; L-homocysteine from S-adenosyl-L-homocysteine: step 1/1. Its function is as follows. May play a key role in the regulation of the intracellular concentration of adenosylhomocysteine. This Xanthomonas euvesicatoria pv. vesicatoria (strain 85-10) (Xanthomonas campestris pv. vesicatoria) protein is Adenosylhomocysteinase.